The sequence spans 261 residues: Cytochrome c oxidase subunit 3 (261 aa).

The Mitochondrial matrix segment spans residues 1–15; that stretch reads MTHQTHAYHMVNPSP. The helical transmembrane segment at 16 to 34 threads the bilayer; the sequence is WPLTGALSALLMTSGLTMW. At 35 to 40 the chain is on the mitochondrial intermembrane side; the sequence is FHFNSM. Residues 41 to 66 form a helical membrane-spanning segment; it reads LLLSLGLLTNTLTMYQWWRDIIREST. Residues 67–72 lie on the Mitochondrial matrix side of the membrane; it reads FQGHHT. Residues 73 to 105 form a helical membrane-spanning segment; it reads SVVQKGLRYGMILFIISEVLFFTGFFWAFYHSS. Over 106–128 the chain is Mitochondrial intermembrane; the sequence is LAPTPELGGCWPPTGIHPLNPLE. The chain crosses the membrane as a helical span at residues 129–152; that stretch reads VPLLNTSILLASGVSITWAHHSLM. Residues 153–155 are Mitochondrial matrix-facing; sequence EGD. The chain crosses the membrane as a helical span at residues 156-183; the sequence is RKHMIQALSITIALGVYFTLLQASEYYE. Residues 184-190 are Mitochondrial intermembrane-facing; it reads APFTISD. A helical transmembrane segment spans residues 191–223; that stretch reads GVYGSTFFVATGFHGLHVIIGSTFLAVCLLRQL. The Mitochondrial matrix portion of the chain corresponds to 224–232; that stretch reads KFHFTSNHH. The chain crosses the membrane as a helical span at residues 233-256; sequence FGFEAAAWYWHFVDVVWLFLYVSI. Over 257 to 261 the chain is Mitochondrial intermembrane; sequence YWWGS.

The protein belongs to the cytochrome c oxidase subunit 3 family. As to quaternary structure, component of the cytochrome c oxidase (complex IV, CIV), a multisubunit enzyme composed of 14 subunits. The complex is composed of a catalytic core of 3 subunits MT-CO1, MT-CO2 and MT-CO3, encoded in the mitochondrial DNA, and 11 supernumerary subunits COX4I, COX5A, COX5B, COX6A, COX6B, COX6C, COX7A, COX7B, COX7C, COX8 and NDUFA4, which are encoded in the nuclear genome. The complex exists as a monomer or a dimer and forms supercomplexes (SCs) in the inner mitochondrial membrane with NADH-ubiquinone oxidoreductase (complex I, CI) and ubiquinol-cytochrome c oxidoreductase (cytochrome b-c1 complex, complex III, CIII), resulting in different assemblies (supercomplex SCI(1)III(2)IV(1) and megacomplex MCI(2)III(2)IV(2)).

It localises to the mitochondrion inner membrane. It carries out the reaction 4 Fe(II)-[cytochrome c] + O2 + 8 H(+)(in) = 4 Fe(III)-[cytochrome c] + 2 H2O + 4 H(+)(out). Functionally, component of the cytochrome c oxidase, the last enzyme in the mitochondrial electron transport chain which drives oxidative phosphorylation. The respiratory chain contains 3 multisubunit complexes succinate dehydrogenase (complex II, CII), ubiquinol-cytochrome c oxidoreductase (cytochrome b-c1 complex, complex III, CIII) and cytochrome c oxidase (complex IV, CIV), that cooperate to transfer electrons derived from NADH and succinate to molecular oxygen, creating an electrochemical gradient over the inner membrane that drives transmembrane transport and the ATP synthase. Cytochrome c oxidase is the component of the respiratory chain that catalyzes the reduction of oxygen to water. Electrons originating from reduced cytochrome c in the intermembrane space (IMS) are transferred via the dinuclear copper A center (CU(A)) of subunit 2 and heme A of subunit 1 to the active site in subunit 1, a binuclear center (BNC) formed by heme A3 and copper B (CU(B)). The BNC reduces molecular oxygen to 2 water molecules using 4 electrons from cytochrome c in the IMS and 4 protons from the mitochondrial matrix. The sequence is that of Cytochrome c oxidase subunit 3 (MT-CO3) from Sus scrofa (Pig).